We begin with the raw amino-acid sequence, 421 residues long: WD repeat and SOCS box-containing protein 1 (421 aa).

WD repeat units follow at residues 124 to 165, 168 to 208, 212 to 251, 254 to 293, and 309 to 346; these read SRCV…LLLN, DHIE…NMVK, AHQNWVYSCAFSPDCSMLCSVGASKAVFLWNMDKYTMIRK, GHHHDVVACDFSPDGALLATASYDTRVYVWDPHNGDLLME, and ANDRWVRAVSFSHDGLHVASLADDKMVRFWRIDEDCPV. The 50-residue stretch at 372 to 421 folds into the SOCS box domain; it reads DGSVYFWATPRQVPSLQHICRMSIRRVMSTQEVQKLPVPSKILAFLSYRG.

As to quaternary structure, interacts with DIO2. Component of the probable ECS(WSB1) E3 ubiquitin-protein ligase complex which contains CUL5, RNF7/RBX2, Elongin BC complex and WSB1. Component of a probable ECS-like E3 ubiquitin-protein ligase complex which contains CUL5, RBX1, Elongin BC complex and WSB1. Interacts with CUL5, RNF7, ELOB and ELOC. Binds to HIPK2 through WD40 repeats.

Its pathway is protein modification; protein ubiquitination. Probable substrate-recognition component of a SCF-like ECS (Elongin-Cullin-SOCS-box protein) E3 ubiquitin ligase complex which mediates the ubiquitination and subsequent proteasomal degradation of target proteins. Recognizes type II iodothyronine deiodinase/DIO2. Confers constitutive instability to HIPK2 through proteasomal degradation. The chain is WD repeat and SOCS box-containing protein 1 (Wsb1) from Mus musculus (Mouse).